The following is a 258-amino-acid chain: MEEMKKTAIRLPKGKQKPIKTEWNSRCVLFTYFQGDISSVVDEHFSRALSNIKSPQELTPSSQSEGVMLKNDDSMSPNQWRYSSPWTKPQPEVPVTNRAANCNLHVPGPMAVNQFSPSLARRASVRPGELWHFSSLAGTSSLEPGYSHPFPARHLVPEPQPDGKREPLLSLLQQDRCLARPQESAARENGNPGQIAGSTGLLFNLPPGSVHYKKLYVSRGSASTSLPNETLSELETPGKYSLTPPNHWGHPHRYLQHL.

Polar residues-rich tracts occupy residues 55-65 and 74-87; these read PQELTPSSQSE and SMSP…SPWT. The interval 55–93 is disordered; the sequence is PQELTPSSQSEGVMLKNDDSMSPNQWRYSSPWTKPQPEV.

This sequence belongs to the vestigial family. Interacts with TEFs.

The protein resides in the nucleus. Its function is as follows. May act as a specific coactivator for the mammalian TEFs. The protein is Transcription cofactor vestigial-like protein 1 (VGLL1) of Homo sapiens (Human).